The chain runs to 391 residues: Terminal nucleotidyltransferase 5C (391 aa).

It belongs to the TENT family. In terms of assembly, interacts with BCCIP and PABPC1; the interaction has no effect on TENT5C poly(A) polymerase function. Interacts with PLK4; this interaction leads to the TENT5C recruitment into the centrosome. Expressed by splenocytes, expression is increased in activated splenocytes.

It localises to the nucleus. The protein localises to the cytoplasm. The protein resides in the cytoskeleton. Its subcellular location is the microtubule organizing center. It is found in the centrosome. It catalyses the reaction RNA(n) + ATP = RNA(n)-3'-adenine ribonucleotide + diphosphate. Functionally, catalyzes the transfer of one adenosine molecule from an ATP to an mRNA poly(A) tail bearing a 3'-OH terminal group and enhances mRNA stability and gene expression. Can also elongate RNA oligos ending with uridine molecule, provided that the sequence is adenosine-rich. Mainly targets mRNAs encoding endoplasmic reticulum-targeted protein. This is Terminal nucleotidyltransferase 5C from Mus musculus (Mouse).